The chain runs to 168 residues: DAZ-associated protein 2 (168 aa).

The segment covering 1-13 (MNSKGQYPTQPTY) has biased composition (low complexity). The disordered stretch occupies residues 1-25 (MNSKGQYPTQPTYPVQPPGNPVYPQ). The PPAY signature appears at 39-42 (PPAY). Ser77 is subject to Phosphoserine.

Interacts with SOX6. Interacts with DAZ1 and DAZL. Interacts with IL17RB. May interact with FAM168B. Interacts with INCA1. Interacts with EIF4G1 and EIF4G2. Interacts (via PPAY motif) with NEDD4 (via WW domains). Interacts with transcription factor TCF4; the interaction results in localization of DAZAP2 to the nucleus. Interacts with transcription factors TCF7 and TCF7L1. Interacts with transcription factor LEF1. Interacts with serine/threonine-protein kinase HIPK2; the interaction results in phosphorylation of DAZAP2 which causes localization of DAZAP2 to the nucleus, reduces interaction of DAZAP2 with HIPK2 and prevents DAZAP2-dependent degradation of HIPK2. Interacts with ubiquitin ligase SIAH1; the interaction is decreased following phosphorylation of DAZAP2 by HIPK2. Interacts with TP53; the interaction is triggered by DNA damage. In terms of processing, ubiquitinated by SMURF2, leading to proteasomal degradation. Ubiquitinated by NEDD4, leading to proteasomal degradation. Following DNA damage, phosphorylated by HIPK2 which promotes DAZAP2 localization to the nucleus, reduces interaction of DAZAP2 with HIPK2 and SIAH1, and prevents DAZAP2-dependent ubiquitination of HIPK2 by E3 ubiquitin-protein ligase SIAH1 and subsequent HIPK2 proteasomal degradation.

It localises to the cytoplasm. Its subcellular location is the nucleus. The protein resides in the nucleus speckle. It is found in the nuclear body. The protein localises to the stress granule. In terms of biological role, in unstressed cells, promotes SIAH1-mediated polyubiquitination and degradation of the serine/threonine-protein kinase HIPK2, probably by acting as a loading factor that potentiates complex formation between HIPK2 and ubiquitin ligase SIAH1. In response to DNA damage, localizes to the nucleus following phosphorylation by HIPK2 and modulates the expression of a subset of TP53/p53 target genes by binding to TP53 at target gene promoters. This limits the expression of a number of cell death-mediating TP53 target genes, reducing DNA damage-induced cell death. Enhances the binding of transcription factor TCF7L2/TCF4, a Wnt signaling pathway effector, to the promoters of target genes. Plays a role in stress granule formation. The protein is DAZ-associated protein 2 of Rattus norvegicus (Rat).